We begin with the raw amino-acid sequence, 139 residues long: MAERTFAIIKPDATRRNLEGPILSVIQQNGLRVVAMKKMRLTREQAEGFYHVHKERPFFASLTDFMTSGPIVAMVLEGDNAVARWRELMGATNPENAAEGTIRRQFAEGLEANSVHGSDAAETAAFEMGYFFNAMEITG.

Residues Lys10, Phe58, Arg86, Thr92, Arg103, and Asn113 each coordinate ATP. The Pros-phosphohistidine intermediate role is filled by His116.

The protein belongs to the NDK family. As to quaternary structure, homotetramer. Mg(2+) is required as a cofactor.

It localises to the cytoplasm. It catalyses the reaction a 2'-deoxyribonucleoside 5'-diphosphate + ATP = a 2'-deoxyribonucleoside 5'-triphosphate + ADP. The enzyme catalyses a ribonucleoside 5'-diphosphate + ATP = a ribonucleoside 5'-triphosphate + ADP. Major role in the synthesis of nucleoside triphosphates other than ATP. The ATP gamma phosphate is transferred to the NDP beta phosphate via a ping-pong mechanism, using a phosphorylated active-site intermediate. This chain is Nucleoside diphosphate kinase, found in Oleidesulfovibrio alaskensis (strain ATCC BAA-1058 / DSM 17464 / G20) (Desulfovibrio alaskensis).